The chain runs to 112 residues: UPF0102 protein JJD26997_0163 (112 aa).

The protein belongs to the UPF0102 family.

The protein is UPF0102 protein JJD26997_0163 of Campylobacter jejuni subsp. doylei (strain ATCC BAA-1458 / RM4099 / 269.97).